The chain runs to 332 residues: Phenylalanine--tRNA ligase alpha subunit (332 aa).

Glutamate 254 serves as a coordination point for Mg(2+).

The protein belongs to the class-II aminoacyl-tRNA synthetase family. Phe-tRNA synthetase alpha subunit type 1 subfamily. As to quaternary structure, tetramer of two alpha and two beta subunits. Mg(2+) is required as a cofactor.

It localises to the cytoplasm. The catalysed reaction is tRNA(Phe) + L-phenylalanine + ATP = L-phenylalanyl-tRNA(Phe) + AMP + diphosphate + H(+). The chain is Phenylalanine--tRNA ligase alpha subunit from Hydrogenovibrio crunogenus (strain DSM 25203 / XCL-2) (Thiomicrospira crunogena).